Consider the following 284-residue polypeptide: S-formylglutathione hydrolase (284 aa).

An N-acetylalanine modification is found at Ala-2. Positions 63 and 67 each coordinate substrate. Catalysis depends on charge relay system residues Ser-152, Asp-229, and His-262.

This sequence belongs to the esterase D family. As to quaternary structure, homodimer.

The catalysed reaction is S-formylglutathione + H2O = formate + glutathione + H(+). Activity toward p-nitrophenyl acetate inhibited by N-ethylmaleimide, 10-(fluoroethoxyphosphinyl)-N-(biotinamidopentyl)decanamide (FP-biotin), iodoacetamide, CuCl(2) and ZnSO(4), but not by phenylmethylsulfonyl fluoride, EDTA, Mg(2+), Mn(2+), Ca(2+) or paraoxon, an organo-phosphate inhibitor of serine hydrolases. Functionally, serine hydrolase which catalyzes the hydrolysis of S-formylglutathione to glutathione and formic acid. Also hydrolyzes S-acetylglutathione and a range of carboxyesters in vitro. Involved in the detoxification of formaldehyde. This chain is S-formylglutathione hydrolase (SFGH), found in Arabidopsis thaliana (Mouse-ear cress).